A 161-amino-acid polypeptide reads, in one-letter code: MPSFDIVSEVDFVEVRNAVDNSARELKTRFDFKNVEASITFDKEIVKITTESDFQLTQLVSILRGNLAKREVDAQSMTQKDTVRTGKAWACNVEFKQGIESDTAKKVVKTIKDAKLKVQASIQGEKVRVTAKKRDDLQAAMALVRNNEELGQPFQFDNFRD.

Belongs to the YajQ family.

Its function is as follows. Nucleotide-binding protein. This chain is Nucleotide-binding protein PBPRA2024, found in Photobacterium profundum (strain SS9).